The chain runs to 559 residues: Protein NRT1/ PTR FAMILY 2.8 (559 aa).

11 consecutive transmembrane segments (helical) span residues 57–77, 92–112, 132–152, 178–198, 206–226, 321–341, 374–394, 404–424, 437–457, 481–501, and 529–549; these read GVFLVNVINIWFGSCNILTLA, LLLGSIASFIGMGIFALTAAL, KWQLGVLFSGLGLLAIGAGGV, FFNWWYFSFTVALVIALTGVV, WVIGFVIPTACLALSITTFVI, LKCVTAILPVWVTGIACFILT, VSMITLAIWISLYECVIIPIV, LTLKHRIEIVMGIICMIVAGF, GSFVSPVSIVMLLPQFALAGL, VAGAIFFLSSSIASYICTLLI, and YFFIIAGIQVANLLYFRLFAS.

This sequence belongs to the major facilitator superfamily. Proton-dependent oligopeptide transporter (POT/PTR) (TC 2.A.17) family. As to expression, expressed in flowers.

The protein localises to the membrane. The sequence is that of Protein NRT1/ PTR FAMILY 2.8 (NPF2.8) from Arabidopsis thaliana (Mouse-ear cress).